A 702-amino-acid polypeptide reads, in one-letter code: ATP-dependent zinc metalloprotease FtsH (702 aa).

At Met1–Lys26 the chain is on the cytoplasmic side. Residues Val27–Pro47 form a helical membrane-spanning segment. Residues Arg48–Asp175 lie on the Extracellular side of the membrane. The helical transmembrane segment at Val176–Phe196 threads the bilayer. At Trp197–Ser702 the chain is on the cytoplasmic side. Gly271 to Thr278 contacts ATP. A Zn(2+)-binding site is contributed by His493. Glu494 is an active-site residue. Zn(2+) is bound by residues His497 and Asp572. The tract at residues Glu682–Ser702 is disordered. Positions Asn690–Ser702 are enriched in basic and acidic residues.

The protein in the central section; belongs to the AAA ATPase family. This sequence in the C-terminal section; belongs to the peptidase M41 family. In terms of assembly, homohexamer. Requires Zn(2+) as cofactor.

The protein resides in the cell membrane. Functionally, acts as a processive, ATP-dependent zinc metallopeptidase for both cytoplasmic and membrane proteins. Plays a role in the quality control of integral membrane proteins. This chain is ATP-dependent zinc metalloprotease FtsH, found in Mycoplasma genitalium (strain ATCC 33530 / DSM 19775 / NCTC 10195 / G37) (Mycoplasmoides genitalium).